Reading from the N-terminus, the 314-residue chain is tRNA-cytidine(32) 2-sulfurtransferase (314 aa).

The short motif at 39–44 (SGGKDS) is the PP-loop motif element. Cys-114, Cys-117, and Cys-205 together coordinate [4Fe-4S] cluster.

The protein belongs to the TtcA family. In terms of assembly, homodimer. It depends on Mg(2+) as a cofactor. [4Fe-4S] cluster serves as cofactor.

It localises to the cytoplasm. It catalyses the reaction cytidine(32) in tRNA + S-sulfanyl-L-cysteinyl-[cysteine desulfurase] + AH2 + ATP = 2-thiocytidine(32) in tRNA + L-cysteinyl-[cysteine desulfurase] + A + AMP + diphosphate + H(+). It functions in the pathway tRNA modification. Its function is as follows. Catalyzes the ATP-dependent 2-thiolation of cytidine in position 32 of tRNA, to form 2-thiocytidine (s(2)C32). The sulfur atoms are provided by the cysteine/cysteine desulfurase (IscS) system. This Cupriavidus metallidurans (strain ATCC 43123 / DSM 2839 / NBRC 102507 / CH34) (Ralstonia metallidurans) protein is tRNA-cytidine(32) 2-sulfurtransferase.